The sequence spans 474 residues: MNKKMFPKIYYYDQDFIDIYNKSLSWIQDKVILQKVADRGKKDKNYYSENCDYIDQMQACMSSFFLVYSNGEYSSTSAIDKFYQLQEESGAIRARYDNNNAIIDLDENEENIGFPIFAWAEYNLYHKTGNKKRISEVLPILDKYYKWIESKFLKENGLYSIDVNKIFYKNSPRVDAYYPIDFNSLQVHNAYCISKLADILNDKNLSLEYKKRFFSLKVKINSLMWSEKDGFYYDLDVNENILEIKTIVGFFPMLSEIPSEDRIERMIFYLKSTNHFGTPNPFPTLSVSEPGFSEDGNGYYGSVYTYMNFFVIKGLEYCGRANIAREFTIRHLYYILDTLMPFNKIKGHIWEAYRPMQEGPAYFDSNKKTYTEKGLICYLALFSISLMIENIIGLTISLPDKTVYWNIPTLEIMGIESLSLKKNQTTIICNKGKRGWEIKMESEKLYYFTINILNKKEKTLPIPSGRCSMLLDKL.

The chain crosses the membrane as a helical span at residues 374 to 398 (GLICYLALFSISLMIENIIGLTISL).

The protein localises to the membrane. This is an uncharacterized protein from Borreliella burgdorferi (strain ATCC 35210 / DSM 4680 / CIP 102532 / B31) (Borrelia burgdorferi).